A 113-amino-acid polypeptide reads, in one-letter code: Integration host factor subunit alpha (113 aa).

2 disordered regions span residues 59–80 (GNFQ…GETI) and 94–113 (QKLK…ASAE). A compositionally biased stretch (pro residues) spans 104-113 (NSPPDPASAE).

It belongs to the bacterial histone-like protein family. Heterodimer of an alpha and a beta chain.

This protein is one of the two subunits of integration host factor, a specific DNA-binding protein that functions in genetic recombination as well as in transcriptional and translational control. The sequence is that of Integration host factor subunit alpha from Bordetella pertussis (strain Tohama I / ATCC BAA-589 / NCTC 13251).